We begin with the raw amino-acid sequence, 274 residues long: Hematopoietically-expressed homeobox protein hhex (274 aa).

Residues 139–198 constitute a DNA-binding region (homeobox); sequence RKGGQVRFSNDQTIELEKKFETQKYLSPPERKRLAKMLQLSERQVKTWFQNRRAKWRRLK. The segment at 197 to 274 is disordered; that stretch reads LKQENPQGNK…GDKGFYNCAH (78 aa). A compositionally biased stretch (polar residues) spans 237-248; it reads DEPTSSPTSQET. The segment covering 249 to 263 has biased composition (acidic residues); sequence LDSEVSDDSDQEVDI.

Expressed in the most dorsoanterior endomesoderm of the blastula and gastrula embryo, and later is restricted to the forming liver diverticulum.

The protein localises to the nucleus. Recognizes the DNA sequence 5'-ATTAA-3'. Transcriptional repressor. Regulates the differentiation of both endothelial and blood cells. Probably plays a role in the proliferation of vascular endothelial cells during blood vessel development. Establishes anterior identity at two levels; acts early to enhance canonical wnt-signaling by repressing expression of tle4, and acts later to inhibit nodal-signaling by directly targeting nodal/nr1 and nodal2/nr2. May play a role in liver development. Induces heart development. The protein is Hematopoietically-expressed homeobox protein hhex of Xenopus tropicalis (Western clawed frog).